The sequence spans 83 residues: Conotoxin Pu6.1 (83 aa).

An N-terminal signal peptide occupies residues 1 to 19 (MKLVLAIVLILMLVSLSTG). Residues 20–42 (AEESGQEISMVGPPLYIWDPIPP) constitute a propeptide that is removed on maturation. Disulfide bonds link cysteine 43–cysteine 57, cysteine 50–cysteine 62, and cysteine 56–cysteine 78.

Belongs to the conotoxin I3 superfamily. As to expression, expressed by the venom duct.

It is found in the secreted. This Conus pulicarius (Flea-bitten cone) protein is Conotoxin Pu6.1.